Consider the following 502-residue polypeptide: Inosine-5'-monophosphate dehydrogenase 2 (502 aa).

At Ser-2 the chain carries N-acetylserine. A CBS domain is found at 166–225 (MKSCENKDYYVPWDIDLDKIEAVLEDKQKGFVVLEKEGETVNVVTKDDVERVKGYPKLGS). Residues 264-266 (DSS) and 314-316 (GMG) each bind NAD(+). Gly-316 and Gly-318 together coordinate K(+). An IMP-binding site is contributed by Ser-319. Cys-321 contacts K(+). Cys-321 (thioimidate intermediate) is an active-site residue. IMP is bound by residues 354–356 (DGG), 377–378 (GS), and 401–405 (YRGMG). Arg-417 serves as the catalytic Proton acceptor. Gln-429 contacts IMP. 3 residues coordinate K(+): Glu-488, Gly-489, and Gly-490.

The protein belongs to the IMPDH/GMPR family. As to quaternary structure, homotetramer. The cofactor is K(+).

The protein localises to the cytoplasm. It carries out the reaction IMP + NAD(+) + H2O = XMP + NADH + H(+). The protein operates within purine metabolism; XMP biosynthesis via de novo pathway; XMP from IMP: step 1/1. With respect to regulation, mycophenolic acid (MPA) is a non-competitive inhibitor that prevents formation of the closed enzyme conformation by binding to the same site as the amobile flap. In contrast, mizoribine monophosphate (MZP) is a competitive inhibitor that induces the closed conformation. MPA is a potent inhibitor of mammalian IMPDHs but a poor inhibitor of the bacterial enzymes. MZP is a more potent inhibitor of bacterial IMPDH. Catalyzes the conversion of inosine 5'-phosphate (IMP) to xanthosine 5'-phosphate (XMP), the first committed and rate-limiting step in the de novo synthesis of guanine nucleotides, and therefore plays an important role in the regulation of cell growth. The sequence is that of Inosine-5'-monophosphate dehydrogenase 2 from Arabidopsis thaliana (Mouse-ear cress).